A 228-amino-acid polypeptide reads, in one-letter code: ATP synthase subunit a 2 (228 aa).

6 helical membrane passes run 16 to 36 (VGTTVVTTWGIMVVLSLGAWL), 74 to 94 (VFPFVATLWLFIGIANLSSLI), 103 to 123 (DLSATTALALLVFFSVHWFGI), 139 to 159 (SPFLLPFHVIGEITRTLALAV), 173 to 193 (LLVLLVAGLFAPIPLLMLHIV), and 194 to 214 (EALVQAYIFGMLTLVYIAGAI).

It belongs to the ATPase A chain family. F-type ATPases have 2 components, CF(1) - the catalytic core - and CF(0) - the membrane proton channel. CF(1) has five subunits: alpha(3), beta(3), gamma(1), delta(1), epsilon(1). CF(0) has three main subunits: a(1), b(2) and c(9-12). The alpha and beta chains form an alternating ring which encloses part of the gamma chain. CF(1) is attached to CF(0) by a central stalk formed by the gamma and epsilon chains, while a peripheral stalk is formed by the delta and b chains.

Its subcellular location is the cell inner membrane. Functionally, key component of the proton channel; it plays a direct role in the translocation of protons across the membrane. In Pelobacter propionicus (strain DSM 2379 / NBRC 103807 / OttBd1), this protein is ATP synthase subunit a 2.